Here is a 158-residue protein sequence, read N- to C-terminus: C-type natriuretic peptide 3 (158 aa).

The first 21 residues, 1 to 21, serve as a signal peptide directing secretion; sequence MSLNLPGYALFFILLVASSGA. A propeptide spanning residues 22–136 is cleaved from the precursor; the sequence is KPAPDLQILE…SKRSRSRYKK (115 aa). The disordered stretch occupies residues 32–95; the sequence is PPLSSLEEQE…EVQERGRGTG (64 aa). The span at 47 to 64 shows a compositional bias: basic and acidic residues; the sequence is VQEKVQEQQEEVQEKVQE. Residues 65-86 show a composition bias toward acidic residues; that stretch reads QQEEVQEQQEEVQEQQEEQQEE. A disulfide bridge links cysteine 142 with cysteine 158.

This sequence belongs to the natriuretic peptide family.

The protein localises to the secreted. Its function is as follows. Exhibits natriuretic and vasodepressant activity. Has cGMP-stimulating activity. May help to regulate body fluid homeostasis in a variety of aquatic environments. This Takifugu rubripes (Japanese pufferfish) protein is C-type natriuretic peptide 3.